Here is a 131-residue protein sequence, read N- to C-terminus: Small ribosomal subunit protein uS8 (131 aa).

The protein belongs to the universal ribosomal protein uS8 family. Part of the 30S ribosomal subunit. Contacts proteins S5 and S12.

Its function is as follows. One of the primary rRNA binding proteins, it binds directly to 16S rRNA central domain where it helps coordinate assembly of the platform of the 30S subunit. This Chlorobium phaeobacteroides (strain DSM 266 / SMG 266 / 2430) protein is Small ribosomal subunit protein uS8.